Here is a 294-residue protein sequence, read N- to C-terminus: Bifunctional protein FolD (294 aa).

Residues 166 to 168, Ser191, and Ile232 contribute to the NADP(+) site; that span reads GRS.

It belongs to the tetrahydrofolate dehydrogenase/cyclohydrolase family. As to quaternary structure, homodimer.

The catalysed reaction is (6R)-5,10-methylene-5,6,7,8-tetrahydrofolate + NADP(+) = (6R)-5,10-methenyltetrahydrofolate + NADPH. The enzyme catalyses (6R)-5,10-methenyltetrahydrofolate + H2O = (6R)-10-formyltetrahydrofolate + H(+). Its pathway is one-carbon metabolism; tetrahydrofolate interconversion. In terms of biological role, catalyzes the oxidation of 5,10-methylenetetrahydrofolate to 5,10-methenyltetrahydrofolate and then the hydrolysis of 5,10-methenyltetrahydrofolate to 10-formyltetrahydrofolate. The protein is Bifunctional protein FolD of Nitrobacter winogradskyi (strain ATCC 25391 / DSM 10237 / CIP 104748 / NCIMB 11846 / Nb-255).